A 464-amino-acid chain; its full sequence is Fumarate hydratase class II 1 (464 aa).

Residues 96–98, 127–130, 137–139, and Thr-185 contribute to the substrate site; these read SGT, HPND, and SSN. His-186 acts as the Proton donor/acceptor in catalysis. Ser-316 is a catalytic residue. Substrate-binding positions include Ser-317 and 322-324; that span reads KVN.

It belongs to the class-II fumarase/aspartase family. Fumarase subfamily. As to quaternary structure, homotetramer.

Its subcellular location is the cytoplasm. The enzyme catalyses (S)-malate = fumarate + H2O. It participates in carbohydrate metabolism; tricarboxylic acid cycle; (S)-malate from fumarate: step 1/1. In terms of biological role, involved in the TCA cycle. Catalyzes the stereospecific interconversion of fumarate to L-malate. This Pseudomonas aeruginosa (strain ATCC 15692 / DSM 22644 / CIP 104116 / JCM 14847 / LMG 12228 / 1C / PRS 101 / PAO1) protein is Fumarate hydratase class II 1.